A 116-amino-acid polypeptide reads, in one-letter code: Holo-[acyl-carrier-protein] synthase (116 aa).

Positions 8 and 50 each coordinate Mg(2+).

This sequence belongs to the P-Pant transferase superfamily. AcpS family. Mg(2+) serves as cofactor.

Its subcellular location is the cytoplasm. It carries out the reaction apo-[ACP] + CoA = holo-[ACP] + adenosine 3',5'-bisphosphate + H(+). Transfers the 4'-phosphopantetheine moiety from coenzyme A to a Ser of acyl-carrier-protein. The polypeptide is Holo-[acyl-carrier-protein] synthase (Beutenbergia cavernae (strain ATCC BAA-8 / DSM 12333 / CCUG 43141 / JCM 11478 / NBRC 16432 / NCIMB 13614 / HKI 0122)).